The following is a 310-amino-acid chain: tRNA pseudouridine synthase B (310 aa).

Asp-49 acts as the Nucleophile in catalysis.

Belongs to the pseudouridine synthase TruB family. Type 1 subfamily.

The catalysed reaction is uridine(55) in tRNA = pseudouridine(55) in tRNA. In terms of biological role, responsible for synthesis of pseudouridine from uracil-55 in the psi GC loop of transfer RNAs. This is tRNA pseudouridine synthase B from Idiomarina loihiensis (strain ATCC BAA-735 / DSM 15497 / L2-TR).